Reading from the N-terminus, the 404-residue chain is NADH-quinone oxidoreductase subunit D 2 (404 aa).

This sequence belongs to the complex I 49 kDa subunit family. As to quaternary structure, NDH-1 is composed of 14 different subunits. Subunits NuoB, C, D, E, F, and G constitute the peripheral sector of the complex.

Its subcellular location is the cell inner membrane. It carries out the reaction a quinone + NADH + 5 H(+)(in) = a quinol + NAD(+) + 4 H(+)(out). In terms of biological role, NDH-1 shuttles electrons from NADH, via FMN and iron-sulfur (Fe-S) centers, to quinones in the respiratory chain. The immediate electron acceptor for the enzyme in this species is believed to be ubiquinone. Couples the redox reaction to proton translocation (for every two electrons transferred, four hydrogen ions are translocated across the cytoplasmic membrane), and thus conserves the redox energy in a proton gradient. This is NADH-quinone oxidoreductase subunit D 2 from Rhizobium etli (strain CIAT 652).